The sequence spans 118 residues: Melanoma antigen recognized by T-cells 1 (118 aa).

Residues 27–47 form a helical membrane-spanning segment; that stretch reads AAGIGILTVILGVLLLIGCWY. At 48 to 118 the chain is on the cytoplasmic side; it reads CRRRNGYRAL…AEQSPPPYSP (71 aa). Residues 78–118 are disordered; the sequence is GFDHRDSKVSLQEKNCEPVVPNAPPAYEKLSAEQSPPPYSP. Phosphoserine is present on Ser-108.

Interacts with PMEL. Interacts with GPR143. In terms of processing, acylated. As to expression, expression is restricted to melanoma and melanocyte cell lines and retina.

It localises to the endoplasmic reticulum membrane. It is found in the golgi apparatus. The protein localises to the trans-Golgi network membrane. The protein resides in the melanosome. In terms of biological role, involved in melanosome biogenesis by ensuring the stability of GPR143. Plays a vital role in the expression, stability, trafficking, and processing of melanocyte protein PMEL, which is critical to the formation of stage II melanosomes. This chain is Melanoma antigen recognized by T-cells 1 (MLANA), found in Homo sapiens (Human).